The following is a 642-amino-acid chain: Chaperone protein HtpG (642 aa).

Residues 1–349 are a; substrate-binding; the sequence is MSAATETEVR…SADLPLNVSR (349 aa). Residues 216–238 are disordered; that stretch reads ELPPAPPAKEGEEPEPPKTPEWE. Residues 224–236 show a composition bias toward basic and acidic residues; that stretch reads KEGEEPEPPKTPE. Residues 350-570 form a b region; sequence EILQQNRQVE…AHDMSATLER (221 aa). Residues 571-642 form a c region; that stretch reads LLKEAGQEVP…VKRLNKLLMG (72 aa).

Belongs to the heat shock protein 90 family. In terms of assembly, homodimer.

Its subcellular location is the cytoplasm. Functionally, molecular chaperone. Has ATPase activity. This is Chaperone protein HtpG from Magnetococcus marinus (strain ATCC BAA-1437 / JCM 17883 / MC-1).